The chain runs to 75 residues: Transaldolase (75 aa).

This sequence belongs to the transaldolase family. Type 1 subfamily. In terms of assembly, homodimer. Phosphorylated. Predominantly expressed in Y-organs.

It is found in the cytoplasm. The enzyme catalyses D-sedoheptulose 7-phosphate + D-glyceraldehyde 3-phosphate = D-erythrose 4-phosphate + beta-D-fructose 6-phosphate. The protein operates within carbohydrate degradation; pentose phosphate pathway; D-glyceraldehyde 3-phosphate and beta-D-fructose 6-phosphate from D-ribose 5-phosphate and D-xylulose 5-phosphate (non-oxidative stage): step 2/3. Transaldolase is important for the balance of metabolites in the pentose-phosphate pathway. May play a role in the conversion of sterols into ecdysteroids via NADPH. This is Transaldolase from Carcinus maenas (Common shore crab).